Here is a 204-residue protein sequence, read N- to C-terminus: Leucyl/phenylalanyl-tRNA--protein transferase (204 aa).

It belongs to the L/F-transferase family.

Its subcellular location is the cytoplasm. The enzyme catalyses N-terminal L-lysyl-[protein] + L-leucyl-tRNA(Leu) = N-terminal L-leucyl-L-lysyl-[protein] + tRNA(Leu) + H(+). It catalyses the reaction N-terminal L-arginyl-[protein] + L-leucyl-tRNA(Leu) = N-terminal L-leucyl-L-arginyl-[protein] + tRNA(Leu) + H(+). The catalysed reaction is L-phenylalanyl-tRNA(Phe) + an N-terminal L-alpha-aminoacyl-[protein] = an N-terminal L-phenylalanyl-L-alpha-aminoacyl-[protein] + tRNA(Phe). Functionally, functions in the N-end rule pathway of protein degradation where it conjugates Leu, Phe and, less efficiently, Met from aminoacyl-tRNAs to the N-termini of proteins containing an N-terminal arginine or lysine. The chain is Leucyl/phenylalanyl-tRNA--protein transferase from Rhizobium etli (strain CIAT 652).